We begin with the raw amino-acid sequence, 73 residues long: Protein SlyX homolog (73 aa).

Belongs to the SlyX family.

This is Protein SlyX homolog from Haemophilus influenzae (strain PittEE).